The chain runs to 121 residues: Ribonuclease P protein component (121 aa).

This sequence belongs to the RnpA family. Consists of a catalytic RNA component (M1 or rnpB) and a protein subunit.

It carries out the reaction Endonucleolytic cleavage of RNA, removing 5'-extranucleotides from tRNA precursor.. RNaseP catalyzes the removal of the 5'-leader sequence from pre-tRNA to produce the mature 5'-terminus. It can also cleave other RNA substrates such as 4.5S RNA. The protein component plays an auxiliary but essential role in vivo by binding to the 5'-leader sequence and broadening the substrate specificity of the ribozyme. The sequence is that of Ribonuclease P protein component from Neisseria meningitidis serogroup B (strain ATCC BAA-335 / MC58).